Here is a 127-residue protein sequence, read N- to C-terminus: Auxin-responsive protein SAUR76 (127 aa).

The disordered stretch occupies residues 20–40; that stretch reads SFNTKPNQPPAQTNHSRSSAV.

This sequence belongs to the ARG7 family. As to expression, expressed in cotyledons, hypocotyls and roots of young seedlings. Expressed in emerging lateral root, leaves, flowers, stamens and filaments.

The protein resides in the nucleus. Its subcellular location is the cytoplasm. The protein localises to the cell membrane. Its function is as follows. May be involved in the regulation of ethylene receptor signaling. Promotes cell expansion and plant growth. Involved in the regulation of cell elongation. This chain is Auxin-responsive protein SAUR76, found in Arabidopsis thaliana (Mouse-ear cress).